A 475-amino-acid chain; its full sequence is ATP synthase subunit beta (475 aa).

156–163 serves as a coordination point for ATP; sequence GGAGVGKT.

The protein belongs to the ATPase alpha/beta chains family. F-type ATPases have 2 components, CF(1) - the catalytic core - and CF(0) - the membrane proton channel. CF(1) has five subunits: alpha(3), beta(3), gamma(1), delta(1), epsilon(1). CF(0) has three main subunits: a(1), b(2) and c(9-12). The alpha and beta chains form an alternating ring which encloses part of the gamma chain. CF(1) is attached to CF(0) by a central stalk formed by the gamma and epsilon chains, while a peripheral stalk is formed by the delta and b chains.

It localises to the cell membrane. The catalysed reaction is ATP + H2O + 4 H(+)(in) = ADP + phosphate + 5 H(+)(out). In terms of biological role, produces ATP from ADP in the presence of a proton gradient across the membrane. The catalytic sites are hosted primarily by the beta subunits. In Mycoplasma pneumoniae (strain ATCC 29342 / M129 / Subtype 1) (Mycoplasmoides pneumoniae), this protein is ATP synthase subunit beta.